The chain runs to 378 residues: S-adenosylmethionine:tRNA ribosyltransferase-isomerase (378 aa).

This sequence belongs to the QueA family. Monomer.

Its subcellular location is the cytoplasm. The enzyme catalyses 7-aminomethyl-7-carbaguanosine(34) in tRNA + S-adenosyl-L-methionine = epoxyqueuosine(34) in tRNA + adenine + L-methionine + 2 H(+). Its pathway is tRNA modification; tRNA-queuosine biosynthesis. Its function is as follows. Transfers and isomerizes the ribose moiety from AdoMet to the 7-aminomethyl group of 7-deazaguanine (preQ1-tRNA) to give epoxyqueuosine (oQ-tRNA). This Prochlorococcus marinus (strain MIT 9312) protein is S-adenosylmethionine:tRNA ribosyltransferase-isomerase.